The sequence spans 184 residues: Oligoribonuclease (184 aa).

Residues 7–170 form the Exonuclease domain; it reads LIWIDLEMTG…DDIYESIEEL (164 aa). Residue Tyr128 is part of the active site.

The protein belongs to the oligoribonuclease family.

It localises to the cytoplasm. 3'-to-5' exoribonuclease specific for small oligoribonucleotides. The sequence is that of Oligoribonuclease from Hydrogenovibrio crunogenus (strain DSM 25203 / XCL-2) (Thiomicrospira crunogena).